A 508-amino-acid polypeptide reads, in one-letter code: Photosystem II CP47 reaction center protein (508 aa).

6 helical membrane-spanning segments follow: residues Ser-21–Ser-36, Ile-101–Trp-115, Gly-140–Phe-156, Ile-203–Ser-218, Val-237–Val-252, and Ser-457–Arg-472.

Belongs to the PsbB/PsbC family. PsbB subfamily. As to quaternary structure, PSII is composed of 1 copy each of membrane proteins PsbA, PsbB, PsbC, PsbD, PsbE, PsbF, PsbH, PsbI, PsbJ, PsbK, PsbL, PsbM, PsbT, PsbX, PsbY, PsbZ, Psb30/Ycf12, at least 3 peripheral proteins of the oxygen-evolving complex and a large number of cofactors. It forms dimeric complexes. It depends on Binds multiple chlorophylls. PSII binds additional chlorophylls, carotenoids and specific lipids. as a cofactor.

Its subcellular location is the plastid. The protein localises to the chloroplast thylakoid membrane. Its function is as follows. One of the components of the core complex of photosystem II (PSII). It binds chlorophyll and helps catalyze the primary light-induced photochemical processes of PSII. PSII is a light-driven water:plastoquinone oxidoreductase, using light energy to abstract electrons from H(2)O, generating O(2) and a proton gradient subsequently used for ATP formation. This Ipomoea purpurea (Common morning glory) protein is Photosystem II CP47 reaction center protein.